We begin with the raw amino-acid sequence, 217 residues long: RNA chaperone ProQ (217 aa).

Positions 105–166 are disordered; the sequence is EAKARVQAQR…PREEQHTPVS (62 aa). Residues 121 to 131 show a composition bias toward basic residues; that stretch reads KRERKPRPTTP. The segment covering 132 to 162 has biased composition (basic and acidic residues); the sequence is RRKEGAERKPRAQKPVEKAPKTVKAPREEQH.

It belongs to the ProQ family.

It is found in the cytoplasm. RNA chaperone with significant RNA binding, RNA strand exchange and RNA duplexing activities. May regulate ProP activity through an RNA-based, post-transcriptional mechanism. This Escherichia coli O8 (strain IAI1) protein is RNA chaperone ProQ.